Reading from the N-terminus, the 639-residue chain is CTTNBP2 N-terminal-like protein (639 aa).

Residues M87–S285 are a coiled coil. A phosphoserine mark is found at S284 and S285. Disordered stretches follow at residues V387–S430, R463–T490, and R511–L609. 2 stretches are compositionally biased toward low complexity: residues P407–S430 and Q467–S477. Residues S481, S488, S523, S527, S560, S563, and S568 each carry the phosphoserine modification. The span at R511–F529 shows a compositional bias: polar residues. T570 and T590 each carry phosphothreonine. The span at P587–T600 shows a compositional bias: low complexity. S592 carries the phosphoserine modification.

Interacts with CTTN/cortactin; this interaction may redistribute CTTN to stress fibers. May form homomers. Associates with the core of STRIPAK complexes composed of PP2A catalytic and scaffolding subunits, the striatins (PP2A regulatory subunits), the striatin-associated proteins MOB4, STRIP1 and STRIP2, PDCD10 and members of the STE20 kinases, such as STK24 and STK26.

It localises to the cell projection. It is found in the lamellipodium. The protein resides in the cytoplasm. The protein localises to the cytoskeleton. Its subcellular location is the stress fiber. Regulates lamellipodial actin dynamics in a CTTN-dependent manner. Associates with core striatin-interacting phosphatase and kinase (STRIPAK) complex to form CTTNBP2NL-STRIPAK complexes. STRIPAK complexes have critical roles in protein (de)phosphorylation and are regulators of multiple signaling pathways including Hippo, MAPK, nuclear receptor and cytoskeleton remodeling. Different types of STRIPAK complexes are involved in a variety of biological processes such as cell growth, differentiation, apoptosis, metabolism and immune regulation. The polypeptide is CTTNBP2 N-terminal-like protein (CTTNBP2NL) (Pongo abelii (Sumatran orangutan)).